Consider the following 513-residue polypeptide: Histone acetyltransferase KAT5 (513 aa).

The 58-residue stretch at 8–65 folds into the Tudor-knot domain; it reads IEGCRLPVLRRNQDNEDEWPLAEILSVKDISGRKLFYVHYIDFNKRLDEWVTHERLDL. Lysine 52 is modified (N6-acetyllysine). The tract at residues 69 to 106 is disordered; the sequence is QFPKKEAKTPTKNGLPGSRPGSPEREVPASAQASGKTL. At serine 86 the chain carries Phosphoserine; by GSK3. At serine 90 the chain carries Phosphoserine; by CDK1 and CDK9. An N6-acetyllysine; by autocatalysis mark is found at lysine 104 and lysine 120. Positions 122-220 are disordered; the sequence is REAIPGGEPD…RMTGSLVSDR (99 aa). Residues 133–144 are compositionally biased toward polar residues; sequence PLSSSSCLQPNH. Lysine 148, lysine 150, lysine 187, and lysine 189 each carry N6-acetyllysine; by autocatalysis. Serine 199 is modified (phosphoserine). The 278-residue stretch at 227–504 folds into the MYST-type HAT domain; it reads TRMKNIECIE…IDSKCLHFTP (278 aa). The segment at 260–285 adopts a C2HC MYST-type zinc-finger fold; that stretch reads LYLCEFCLKYGRSLKCLQRHLTKCDL. Lysine 327 bears the N6-acetyllysine; by autocatalysis mark. An interaction with ATF2 region spans residues 368–513; that stretch reads ACILTLPPYQ…PKDWSKRGKW (146 aa). Acetyl-CoA-binding positions include 370–372 and 377–383; these read ILT and QRRGYGK. Catalysis depends on glutamate 403, which acts as the Proton donor/acceptor. Residues serine 407 and serine 416 each contribute to the acetyl-CoA site. Lysine 430 participates in a covalent cross-link: Glycyl lysine isopeptide (Lys-Gly) (interchain with G-Cter in SUMO1); alternate. Lysine 430 participates in a covalent cross-link: Glycyl lysine isopeptide (Lys-Gly) (interchain with G-Cter in SUMO2); alternate. A Glycyl lysine isopeptide (Lys-Gly) (interchain with G-Cter in SUMO1) cross-link involves residue lysine 451.

Belongs to the MYST (SAS/MOZ) family. In terms of assembly, component of the NuA4 histone acetyltransferase complex which contains the catalytic subunit KAT5/TIP60 and the subunits EP400, TRRAP/PAF400, BRD8/SMAP, EPC1, DMAP1/DNMAP1, RUVBL1/TIP49, RUVBL2, ING3, actin, ACTL6A/BAF53A, MORF4L1/MRG15, MORF4L2/MRGX, MRGBP, YEATS4/GAS41, VPS72/YL1 and MEAF6. KAT5/TIP60, EPC1, and ING3 together constitute a minimal HAT complex termed Piccolo NuA4. The NuA4 complex interacts with MYC. Interacts with ATM. Interacts with JADE1. Interacts with PLA2G4A/CPLA2, EDNRA and HDAC7. Interacts with the cytoplasmic tail of APP and APBB1/FE65. Interacts with TRIM24 and TRIM68. Forms a complex with SENP6 and UBE2I in response to UV irradiation. Identified in a complex with HINT1. Interacts with ATF2 and CUL3. Interacts with NR1D2 (via N-terminus). Component of a SWR1-like complex. Interacts with FOXP3. Interacts with ZBTB49. Interacts with SRF. Interacts with ATF3; promoting autoacetylation and deubiquitination by USP7. Interacts with EP300/p300; interaction promotes KAT5 autoacetylation. Interacts with PRKDC; interaction is impaired following KAT5 sumoylation. Interacts with GPR50. Interacts with NME3; this interaction enables recruitment of NME3 at DNA damage sites where it plays a role in the repair of DNA. (Microbial infection) Interacts with HIV-1 TAT. Phosphorylated on Ser-86 and Ser-90; enhanced during G2/M phase. The phosphorylated form has a higher activity. Phosphorylation at Ser-90 by CDK1 or CDK9 is a prerequisite for phosphorylation at Ser-86 by GSK3. Phosphorylation at Ser-86 by GSK3 (GSK3A or GSK3B) activates acetyltransferase and acyltransferase activities. Phosphorylation at Ser-90 by CDK9 promotes KAT5 recruitment to chromatin. Phosphorylation by VRK1 following DNA damage promotes KAT5 association with chromatin and histone acetyltransferase activity. In terms of processing, autoacetylated. Autoacetylation is required for histone acetyltransferase activity. Autoacetylation at Lys-327 is facilitated by interaction with EP300/p300: it prevents ubiquitination and subsequent degradation by the proteasome and promotes acetylation of target proteins. Deacetylated by HDAC3 and SIRT1. Deacetylation by HDAC3 promotes its ubiquitination and cytoplasmic localization. Post-translationally, sumoylated by UBE2I at Lys-430 and Lys-451, leading to increase of its histone acetyltransferase activity in UV-induced DNA damage response, as well as its translocation to nuclear bodies. Sumoylation with SUMO2 by PIAS4 at Lys-430 promotes repair of DNA double-strand breaks (DSBs) via homologous recombination (HR). Sumoylation by PIAS4 impairs interaction with PRKDC, inhibiting non-homologous end joining (NHEJ)-mediated repair of DSBs, thereby facilitating HR. Desumoylated by SENP3. Ubiquitinated by MDM2, leading to its proteasome-dependent degradation. Ubiquitination is prevented by autoacetylation at Lys-327. Ubiquitinated following deacetylation by HDAC3, leading to cytoplasmic localization. Deubiquitinated by USP7 following interaction with ATF3, promoting its stabilization. In terms of processing, (Microbial infection) In case of HIV-1 infection, interaction with the viral Tat protein leads to KAT5 polyubiquitination and targets it to degradation.

The protein localises to the nucleus. It is found in the chromosome. Its subcellular location is the cytoplasm. It localises to the centromere. The protein resides in the kinetochore. The protein localises to the cytoskeleton. It is found in the spindle pole. Its subcellular location is the nucleolus. It localises to the perinuclear region. The enzyme catalyses L-lysyl-[histone] + acetyl-CoA = N(6)-acetyl-L-lysyl-[histone] + CoA + H(+). It catalyses the reaction L-lysyl-[protein] + acetyl-CoA = N(6)-acetyl-L-lysyl-[protein] + CoA + H(+). It carries out the reaction (2E)-butenoyl-CoA + L-lysyl-[protein] = N(6)-(2E)-butenoyl-L-lysyl-[protein] + CoA + H(+). The catalysed reaction is 2-hydroxyisobutanoyl-CoA + L-lysyl-[protein] = N(6)-(2-hydroxyisobutanoyl)-L-lysyl-[protein] + CoA + H(+). The enzyme catalyses (S)-lactoyl-CoA + L-lysyl-[protein] = N(6)-[(S)-lactoyl]-L-lysyl-[protein] + CoA + H(+). With respect to regulation, acyltransferase and acetyltransferase activities are activated by phosphorylation and autoacetylation. Autoacetylation activates the histone acetyltransferase activity. Functionally, catalytic subunit of the NuA4 histone acetyltransferase complex, a multiprotein complex involved in transcriptional activation of select genes principally by acetylation of nucleosomal histones H2A and H4. Histone acetylation alters nucleosome-DNA interactions and promotes interaction of the modified histones with other proteins which positively regulate transcription. The NuA4 histone acetyltransferase complex is required for the activation of transcriptional programs associated with proto-oncogene mediated growth induction, tumor suppressor mediated growth arrest and replicative senescence, apoptosis, and DNA repair. The NuA4 complex plays a direct role in repair of DNA double-strand breaks (DSBs) by promoting homologous recombination (HR): the complex inhibits TP53BP1 binding to chromatin via MBTD1, which recognizes and binds histone H4 trimethylated at 'Lys-20' (H4K20me), and KAT5 that catalyzes acetylation of 'Lys-15' of histone H2A (H2AK15ac), thereby blocking the ubiquitination mark required for TP53BP1 localization at DNA breaks. Also involved in DSB repair by mediating acetylation of 'Lys-5' of histone H2AX (H2AXK5ac), promoting NBN/NBS1 assembly at the sites of DNA damage. The NuA4 complex plays a key role in hematopoietic stem cell maintenance and is required to maintain acetylated H2A.Z/H2AZ1 at MYC target genes. The NuA4 complex is also required for spermatid development by promoting acetylation of histones: histone hyperacetylation is required for histone replacement during the transition from round to elongating spermatids. Component of a SWR1-like complex that specifically mediates the removal of histone H2A.Z/H2AZ1 from the nucleosome. Also acetylates non-histone proteins, such as BMAL1, ATM, AURKB, CHKA, CGAS, ERCC4/XPF, LPIN1, TP53/p53, NDC80/HEC1, NR1D2, RAN, SOX4, FOXP3, SQSTM1, ULK1 and RUBCNL/Pacer. Directly acetylates and activates ATM. Promotes nucleotide excision repair (NER) by mediating acetylation of ERCC4/XPF, thereby promoting formation of the ERCC4-ERCC1 complex. Relieves NR1D2-mediated inhibition of APOC3 expression by acetylating NR1D2. Acts as a regulator of regulatory T-cells (Treg) by catalyzing FOXP3 acetylation, thereby promoting FOXP3 transcriptional repressor activity. Involved in skeletal myoblast differentiation by mediating acetylation of SOX4. Catalyzes acetylation of APBB1/FE65, increasing its transcription activator activity. Promotes transcription elongation during the activation phase of the circadian cycle by catalyzing acetylation of BMAL1, promoting elongation of circadian transcripts. Together with GSK3 (GSK3A or GSK3B), acts as a regulator of autophagy: phosphorylated at Ser-86 by GSK3 under starvation conditions, leading to activate acetyltransferase activity and promote acetylation of key autophagy regulators, such as ULK1 and RUBCNL/Pacer. Acts as a regulator of the cGAS-STING innate antiviral response by catalyzing acetylation the N-terminus of CGAS, thereby promoting CGAS DNA-binding and activation. Also regulates lipid metabolism by mediating acetylation of CHKA or LPIN1. Promotes lipolysis of lipid droplets following glucose deprivation by mediating acetylation of isoform 1 of CHKA, thereby promoting monomerization of CHKA and its conversion into a tyrosine-protein kinase. Acts as a regulator of fatty-acid-induced triacylglycerol synthesis by catalyzing acetylation of LPIN1, thereby promoting the synthesis of diacylglycerol. In addition to protein acetyltransferase, can use different acyl-CoA substrates, such as (2E)-butenoyl-CoA (crotonyl-CoA), S-lactoyl-CoA (lactyl-CoA) and 2-hydroxyisobutanoyl-CoA (2-hydroxyisobutyryl-CoA), and is able to mediate protein crotonylation, lactylation and 2-hydroxyisobutyrylation, respectively. Acts as a key regulator of chromosome segregation and kinetochore-microtubule attachment during mitosis by mediating acetylation or crotonylation of target proteins. Catalyzes acetylation of AURKB at kinetochores, increasing AURKB activity and promoting accurate chromosome segregation in mitosis. Acetylates RAN during mitosis, promoting microtubule assembly at mitotic chromosomes. Acetylates NDC80/HEC1 during mitosis, promoting robust kinetochore-microtubule attachment. Catalyzes crotonylation of MAPRE1/EB1, thereby ensuring accurate spindle positioning in mitosis. Catalyzes lactylation of NBN/NBS1 in response to DNA damage, thereby promoting DNA double-strand breaks (DSBs) via homologous recombination (HR). Its function is as follows. (Microbial infection) Catalyzes the acetylation of flavivirus NS3 protein to modulate their RNA-binding and -unwinding activities leading to facilitate viral replication. In Homo sapiens (Human), this protein is Histone acetyltransferase KAT5.